Here is a 149-residue protein sequence, read N- to C-terminus: 3-dehydroquinate dehydratase (149 aa).

Tyr22 acts as the Proton acceptor in catalysis. Substrate-binding residues include Asn73, His79, and Asp86. His99 (proton donor) is an active-site residue. Substrate is bound by residues 100 to 101 and Arg110; that span reads LS.

It belongs to the type-II 3-dehydroquinase family. Homododecamer.

It carries out the reaction 3-dehydroquinate = 3-dehydroshikimate + H2O. It functions in the pathway metabolic intermediate biosynthesis; chorismate biosynthesis; chorismate from D-erythrose 4-phosphate and phosphoenolpyruvate: step 3/7. In terms of biological role, catalyzes a trans-dehydration via an enolate intermediate. The polypeptide is 3-dehydroquinate dehydratase (Prochlorococcus marinus (strain SARG / CCMP1375 / SS120)).